A 466-amino-acid chain; its full sequence is Ribulose bisphosphate carboxylase large chain (466 aa).

K5 carries the N6,N6,N6-trimethyllysine modification. Substrate is bound by residues N114 and T164. K166 functions as the Proton acceptor in the catalytic mechanism. K168 lines the substrate pocket. 3 residues coordinate Mg(2+): K192, D194, and E195. N6-carboxylysine is present on K192. The Proton acceptor role is filled by H285. Substrate-binding residues include R286, H318, and S370.

It belongs to the RuBisCO large chain family. Type I subfamily. Heterohexadecamer of 8 large chains and 8 small chains; disulfide-linked. The disulfide link is formed within the large subunit homodimers. It depends on Mg(2+) as a cofactor. Post-translationally, the disulfide bond which can form in the large chain dimeric partners within the hexadecamer appears to be associated with oxidative stress and protein turnover.

It is found in the plastid. The protein resides in the chloroplast. The catalysed reaction is 2 (2R)-3-phosphoglycerate + 2 H(+) = D-ribulose 1,5-bisphosphate + CO2 + H2O. It catalyses the reaction D-ribulose 1,5-bisphosphate + O2 = 2-phosphoglycolate + (2R)-3-phosphoglycerate + 2 H(+). Its function is as follows. RuBisCO catalyzes two reactions: the carboxylation of D-ribulose 1,5-bisphosphate, the primary event in carbon dioxide fixation, as well as the oxidative fragmentation of the pentose substrate in the photorespiration process. Both reactions occur simultaneously and in competition at the same active site. This is Ribulose bisphosphate carboxylase large chain from Berzelia lanuginosa (Buttonbush).